An 87-amino-acid polypeptide reads, in one-letter code: Xibalbin-2 (87 aa).

The N-terminal stretch at 1–25 is a signal peptide; sequence MKGVCTRKVLYFFMAVILFVAIVAS. The propeptide occupies 26-45; that stretch reads EDTENRNPAMAMPLQRMEQE.

It belongs to the xibalbin-2 family. In terms of processing, contains 5 disulfide bonds. In terms of tissue distribution, expressed by the venom gland. Not found in the whole body.

The protein resides in the secreted. Functionally, probable neurotoxin. Moderately inhibits voltage-gated potassium channels (Kv1.1/KCNA1, Kv1.2/KCNA2, Kv1.3/KCNA3, and Kv1.6/KCNA6, with the highest toxicity against Kv1.6 (73.2% inhibition at 1 uM)) and weakly inhibits sodium channels (Nav1.4/SCN4A). Does not activate protein kinase A type II (PKA-II) and MAP kinase Erk1/2 in sensory neurons. Does not show cytotoxic activity. Does not have an impact on Ca2+, cAMP, and NO signaling in the cell types analyzed. Does not interfere with the adhesion of leukocytes to endothelial cells. In terms of biological role, moderately inhibits voltage-gated potassium channels (Kv1.1/KCNA1, Kv1.2/KCNA2, Kv1.3/KCNA3, and Kv1.6/KCNA6, with the highest toxicity against Kv1.6 (75.9% inhibition at 1 uM)). Does not activate protein kinase A type II (PKA-II) and MAP kinase Erk1/2 in sensory neurons. Does not show cytotoxic activity. Does not have an impact on Ca2+, cAMP, and NO signaling in the cell types analyzed. Does not interfere with the adhesion of leukocytes to endothelial cells. The polypeptide is Xibalbin-2 (Xibalbanus tulumensis (Blind cave remipede)).